A 1989-amino-acid chain; its full sequence is Exophilin-5 (1989 aa).

Residues 7–63 (AFDFSFLNDEEARKILQVLERNEELQRAEKDRISKLQKTKRDIRWLQGVTGEWFEEI) enclose the RabBD domain. Disordered stretches follow at residues 93–117 (NDPI…PFSS) and 348–391 (TQSK…FLRA). 2 stretches are compositionally biased toward polar residues: residues 100 to 111 (TSRSKNVTNQKK) and 359 to 376 (HQQS…WNRS). The segment covering 377-389 (DSSRDRENQEEFL) has biased composition (basic and acidic residues). Ser-603 is subject to Phosphoserine. Disordered stretches follow at residues 631-651 (FSQI…NPTV), 806-827 (STAS…RTDQ), and 882-933 (AALP…NQKN). Over residues 641–651 (PQSPNLQNPTV) the composition is skewed to polar residues. Phosphoserine occurs at positions 806 and 809. Residues 891-909 (KNSSLDAPVVPSTTVFSRR) are compositionally biased toward polar residues. Over residues 910-927 (SPSDKDPSLGEREEKDNA) the composition is skewed to basic and acidic residues. 2 positions are modified to phosphoserine: Ser-1028 and Ser-1086. Disordered regions lie at residues 1094 to 1113 (EATE…VRKG), 1124 to 1152 (SCPS…ASEL), and 1365 to 1493 (EIFS…TNCQ). Residues 1098–1110 (RMTNVKSSGSTSV) show a composition bias toward polar residues. The residue at position 1124 (Ser-1124) is a Phosphoserine. A compositionally biased stretch (basic and acidic residues) spans 1379–1390 (SENKKERGKKLQ). Low complexity predominate over residues 1416–1431 (SINSSNSGPSSLPALS). Residues 1434–1447 (NIGNSQTRRSSWEC) are compositionally biased toward polar residues. Ser-1505 is subject to Phosphoserine. Disordered stretches follow at residues 1521–1590 (EETQ…NRSS) and 1644–1737 (PEPT…PITF). Composition is skewed to basic and acidic residues over residues 1551–1560 (ESRKAEDEMQ), 1573–1589 (NKNK…ENRS), and 1658–1670 (RLSE…KKSE). Polar residues predominate over residues 1685-1709 (THVSNQKSNSISQRHQNEFKNVSES). Residues Ser-1753, Ser-1768, Ser-1821, and Ser-1851 each carry the phosphoserine modification. The tract at residues 1921 to 1989 (FLKDDLRNPP…LDENDKESEL (69 aa)) is disordered. Residues 1933-1943 (SESLSSNSPSS) are compositionally biased toward low complexity. Acidic residues predominate over residues 1959 to 1989 (YEDDPVDSDCDTDTTTDDEYYLDENDKESEL).

As to quaternary structure, interacts with RAB27A. Expressed in keratinocytes.

In terms of biological role, may act as Rab effector protein and play a role in vesicle trafficking. In Homo sapiens (Human), this protein is Exophilin-5.